Reading from the N-terminus, the 122-residue chain is Large ribosomal subunit protein uL14 (122 aa).

Belongs to the universal ribosomal protein uL14 family. As to quaternary structure, part of the 50S ribosomal subunit. Forms a cluster with proteins L3 and L19. In the 70S ribosome, L14 and L19 interact and together make contacts with the 16S rRNA in bridges B5 and B8.

Binds to 23S rRNA. Forms part of two intersubunit bridges in the 70S ribosome. The chain is Large ribosomal subunit protein uL14 from Carsonella ruddii (strain PV).